The primary structure comprises 652 residues: Acetyl-coenzyme A synthetase (652 aa).

Residues 190-193 (RGGR) and threonine 310 contribute to the CoA site. Residues 386–388 (GEP), 410–415 (DTWWQT), aspartate 499, and arginine 514 each bind ATP. Serine 522 serves as a coordination point for CoA. Arginine 525 provides a ligand contact to ATP. Mg(2+) is bound by residues valine 536, histidine 538, and valine 541. Arginine 583 lines the CoA pocket. Residue lysine 608 is modified to N6-acetyllysine.

This sequence belongs to the ATP-dependent AMP-binding enzyme family. Mg(2+) serves as cofactor. Post-translationally, acetylated. Deacetylation by the SIR2-homolog deacetylase activates the enzyme.

It catalyses the reaction acetate + ATP + CoA = acetyl-CoA + AMP + diphosphate. Functionally, catalyzes the conversion of acetate into acetyl-CoA (AcCoA), an essential intermediate at the junction of anabolic and catabolic pathways. AcsA undergoes a two-step reaction. In the first half reaction, AcsA combines acetate with ATP to form acetyl-adenylate (AcAMP) intermediate. In the second half reaction, it can then transfer the acetyl group from AcAMP to the sulfhydryl group of CoA, forming the product AcCoA. The chain is Acetyl-coenzyme A synthetase from Methylorubrum extorquens (strain CM4 / NCIMB 13688) (Methylobacterium extorquens).